A 112-amino-acid chain; its full sequence is UPF0342 protein SSA_1465 (112 aa).

The protein belongs to the UPF0342 family.

This chain is UPF0342 protein SSA_1465, found in Streptococcus sanguinis (strain SK36).